We begin with the raw amino-acid sequence, 170 residues long: MVDTTKNTKLFTSYGVTTSKTTTPEIAAKLISKAKRPLLVVGTKVLDPELLDRAVKIAQKANIPIAATGSSMPGFVGKDVDAKYINLHQLGFYVTDPNWPGLDGNGTYDTLIVLGHIKYYINQVLSGTKNFSTVKAIAIERNYIQNATMSFGNLSKADHYAALDELIDAL.

Belongs to the CdhB family. Heterotetramer of two alpha and two epsilon subunits. The ACDS complex is made up of alpha, epsilon, beta, gamma and delta subunits with a probable stoichiometry of (alpha(2)epsilon(2))(4)-beta(8)-(gamma(1)delta(1))(8).

Its pathway is one-carbon metabolism; methanogenesis from acetate. Functionally, part of a complex that catalyzes the reversible cleavage of acetyl-CoA, allowing growth on acetate as sole source of carbon and energy. The alpha-epsilon subcomponent functions as a carbon monoxide dehydrogenase. The precise role of the epsilon subunit is unclear; it may have a stabilizing role within the alpha(2)epsilon(2) component and/or be involved in electron transfer to FAD during a potential FAD-mediated CO oxidation. The polypeptide is Acetyl-CoA decarbonylase/synthase complex subunit epsilon 2 (cdhB2) (Methanosarcina acetivorans (strain ATCC 35395 / DSM 2834 / JCM 12185 / C2A)).